The primary structure comprises 210 residues: uncharacterized protein (210 aa).

The protein to E.coli YkgK.

This is an uncharacterized protein from Escherichia coli (strain K12).